The following is a 204-amino-acid chain: Holliday junction branch migration complex subunit RuvA (204 aa).

Residues 1-65 (MIGRLRGAVA…SAGLRLYGFG (65 aa)) form a domain I region. The tract at residues 66–142 (TREDRRAFVL…PITDGPVLMT (77 aa)) is domain II. Residues 143-152 (APGAVAAAPA) form a flexible linker region. Residues 152–204 (AKAAPTGDAVAALMGLGVAEVNARRVVEAAAAKLGDEATVQALIKAGLQELGR) form a domain III region.

This sequence belongs to the RuvA family. As to quaternary structure, homotetramer. Forms an RuvA(8)-RuvB(12)-Holliday junction (HJ) complex. HJ DNA is sandwiched between 2 RuvA tetramers; dsDNA enters through RuvA and exits via RuvB. An RuvB hexamer assembles on each DNA strand where it exits the tetramer. Each RuvB hexamer is contacted by two RuvA subunits (via domain III) on 2 adjacent RuvB subunits; this complex drives branch migration. In the full resolvosome a probable DNA-RuvA(4)-RuvB(12)-RuvC(2) complex forms which resolves the HJ.

Its subcellular location is the cytoplasm. In terms of biological role, the RuvA-RuvB-RuvC complex processes Holliday junction (HJ) DNA during genetic recombination and DNA repair, while the RuvA-RuvB complex plays an important role in the rescue of blocked DNA replication forks via replication fork reversal (RFR). RuvA specifically binds to HJ cruciform DNA, conferring on it an open structure. The RuvB hexamer acts as an ATP-dependent pump, pulling dsDNA into and through the RuvAB complex. HJ branch migration allows RuvC to scan DNA until it finds its consensus sequence, where it cleaves and resolves the cruciform DNA. The chain is Holliday junction branch migration complex subunit RuvA from Caulobacter sp. (strain K31).